A 999-amino-acid chain; its full sequence is Lysosomal alpha-mannosidase (999 aa).

A disordered region spans residues 1–25 (MVGDARPSGVRAGGCRGAVGSRTSS). The signal sequence occupies residues 1–50 (MVGDARPSGVRAGGCRGAVGSRTSSRALRPPLPPLSSLFVLFLAAPCAWA). Residues histidine 73 and aspartate 75 each contribute to the Zn(2+) site. Asparagine 134 carries an N-linked (GlcNAc...) asparagine glycan. Aspartate 197 provides a ligand contact to Zn(2+). Aspartate 197 functions as the Nucleophile in the catalytic mechanism. A disulfide bridge connects residues cysteine 269 and cysteine 274. Asparagine 369 carries an N-linked (GlcNAc...) asparagine glycan. Histidine 448 contacts Zn(2+). A disulfide bridge connects residues cysteine 495 and cysteine 503. The N-linked (GlcNAc...) asparagine glycan is linked to asparagine 499. The propeptide occupies 591–621 (SRDLVIQNEYLRARFDPNTGLLMELENLEQN). N-linked (GlcNAc...) asparagine glycosylation is found at asparagine 634, asparagine 640, asparagine 681, asparagine 755, and asparagine 919.

This sequence belongs to the glycosyl hydrolase 38 family. As to quaternary structure, homodimer. Zn(2+) serves as cofactor. Post-translationally, processed into 5 peptides of 35/38 kDa (A), 11/13 kDa (B) and 22 kDa (C), 38 kDa (D) and 13/15 kDa (E). The A, B and C peptides are disulfide-linked into a 67 kDa complex. In terms of processing, heavily glycosylated. Some sugar chains are of the high-mannose type.

Its subcellular location is the lysosome. It carries out the reaction Hydrolysis of terminal, non-reducing alpha-D-mannose residues in alpha-D-mannosides.. In terms of biological role, necessary for the catabolism of N-linked carbohydrates released during glycoprotein turnover. The polypeptide is Lysosomal alpha-mannosidase (MAN2B1) (Bos taurus (Bovine)).